The chain runs to 152 residues: Superoxide dismutase [Cu-Zn] (152 aa).

Cu cation-binding residues include H45, H47, and H62. A disulfide bridge links C56 with C145. Residues H62, H70, H79, and D82 each contribute to the Zn(2+) site. H119 contacts Cu cation.

Belongs to the Cu-Zn superoxide dismutase family. Homodimer. Cu cation serves as cofactor. Zn(2+) is required as a cofactor.

The protein resides in the cytoplasm. The enzyme catalyses 2 superoxide + 2 H(+) = H2O2 + O2. Destroys radicals which are normally produced within the cells and which are toxic to biological systems. This is Superoxide dismutase [Cu-Zn] (SODCC) from Panax ginseng (Korean ginseng).